The chain runs to 255 residues: Triosephosphate isomerase (255 aa).

Residue 10-12 coordinates substrate; that stretch reads NWK. The active-site Electrophile is His-96. Glu-169 (proton acceptor) is an active-site residue. Residues Gly-175, Ser-214, and 235–236 each bind substrate; that span reads GG.

This sequence belongs to the triosephosphate isomerase family. In terms of assembly, homodimer.

It is found in the cytoplasm. The catalysed reaction is D-glyceraldehyde 3-phosphate = dihydroxyacetone phosphate. Its pathway is carbohydrate biosynthesis; gluconeogenesis. It functions in the pathway carbohydrate degradation; glycolysis; D-glyceraldehyde 3-phosphate from glycerone phosphate: step 1/1. Functionally, involved in the gluconeogenesis. Catalyzes stereospecifically the conversion of dihydroxyacetone phosphate (DHAP) to D-glyceraldehyde-3-phosphate (G3P). In Coxiella burnetii (strain Dugway 5J108-111), this protein is Triosephosphate isomerase.